We begin with the raw amino-acid sequence, 106 residues long: UPF0145 protein BDI_2732 (106 aa).

It belongs to the UPF0145 family.

This Parabacteroides distasonis (strain ATCC 8503 / DSM 20701 / CIP 104284 / JCM 5825 / NCTC 11152) protein is UPF0145 protein BDI_2732.